A 414-amino-acid chain; its full sequence is MTDTTLVEAGDPAEDAPEWPMKRDTGCPFDPPPGVRKLLAEKPLSRARIWDGSTPWVVTRHADQRALLSDPRVSHDGLRDGYPHISADFKFLSMAQPSFAGQDDPEHGRIRRMVTLPFTARRIEAMRPAIQKITDELIDGMLAGPKPVDLVEALALPVPVRVICEMLGVPYEDREFLQQNNNAMIYRDTAQGDAQKAAIAQAMYLKELVGTKLGDRGDDILSDLAVQVEAGEITQDDAAGIGMMLLGAGHETTANMIALGTLALLENPEQLAEVRDSDDPKVIVNTVEELLRYLTIAQDTVRRIAAEDIEIGGVVIKAGEGIVFPLNAANWDPDLYPEAPDRLDIHRANARRHLAFGYGVHQCLGATLARVELQIVYSTLLRRIPTLALAGTLDEIPFKHDQIAHGVYELPVTW.

The tract at residues 1-32 (MTDTTLVEAGDPAEDAPEWPMKRDTGCPFDPP) is disordered. Heme b is bound by residues His-75, His-107, Arg-111, Arg-303, His-361, and Cys-363.

Belongs to the cytochrome P450 family. In terms of assembly, monomer. Heme b is required as a cofactor.

It functions in the pathway antibiotic biosynthesis. In terms of biological role, involved in the synthesis of the 16-membered macrolide antibiotics FD-891 and FD-892. Consecutively catalyzes epoxidation of C8-C9 and then hydroxylation at C10 to convert 25-O-methyl-FD-892 to FD-891. Consecutively catalyzes epoxidation of C8-C9 and then hydroxylation at C10 to convert 8,9-epoxy-FD-892 to 25-O-demethyl-FD-891 as well as converting 25-oxo-FD-892 to 8,9-epoxy-25-oxo-FD-892 and 8,9-epoxy-10-hydroxy-25-oxo-FD-892. In vitro is furnished with P.putida putidaredoxin and putidaredoxin reductase to provide the required two-electron reduction. The sequence is that of Cytochrome P450 GfsF from Streptomyces halstedii.